The chain runs to 167 residues: Putative peroxiredoxin-A (167 aa).

One can recognise a Thioredoxin domain in the interval Ile4–Leu167. Cys53 (cysteine sulfenic acid (-SOH) intermediate) is an active-site residue. A Microbody targeting signal motif is present at residues Ala165–Leu167.

Belongs to the peroxiredoxin family. Prx5 subfamily.

It is found in the peroxisome membrane. It catalyses the reaction a hydroperoxide + [thioredoxin]-dithiol = an alcohol + [thioredoxin]-disulfide + H2O. Its function is as follows. Thiol-specific peroxidase that catalyzes the reduction of hydrogen peroxide and organic hydroperoxides to water and alcohols, respectively. Plays a role in cell protection against oxidative stress by detoxifying peroxides and as sensor of hydrogen peroxide-mediated signaling events. The chain is Putative peroxiredoxin-A (PMPA) from Candida boidinii (Yeast).